A 282-amino-acid chain; its full sequence is Probable septum site-determining protein MinC (282 aa).

Positions 103–147 (SQSRRGGKDEAPKEKAGKPEATAASGQTDAEAAGNTGKGKDSEGA) are disordered. Over residues 104–120 (QSRRGGKDEAPKEKAGK) the composition is skewed to basic and acidic residues.

Belongs to the MinC family. Interacts with MinD and FtsZ.

Its function is as follows. Cell division inhibitor that blocks the formation of polar Z ring septums. Rapidly oscillates between the poles of the cell to destabilize FtsZ filaments that have formed before they mature into polar Z rings. Prevents FtsZ polymerization. In Cupriavidus metallidurans (strain ATCC 43123 / DSM 2839 / NBRC 102507 / CH34) (Ralstonia metallidurans), this protein is Probable septum site-determining protein MinC.